The primary structure comprises 55 residues: Large ribosomal subunit protein bL33 (55 aa).

Residues 1 to 10 (MAKGGREKIK) show a composition bias toward basic and acidic residues. Residues 1–27 (MAKGGREKIKLQSTAGTGHFYTTDKNK) are disordered.

Belongs to the bacterial ribosomal protein bL33 family.

In Polaromonas naphthalenivorans (strain CJ2), this protein is Large ribosomal subunit protein bL33.